The following is a 301-amino-acid chain: Bifunctional protein FolD (301 aa).

NADP(+) contacts are provided by residues 169–171 (GRS), serine 194, and isoleucine 235.

This sequence belongs to the tetrahydrofolate dehydrogenase/cyclohydrolase family. Homodimer.

It catalyses the reaction (6R)-5,10-methylene-5,6,7,8-tetrahydrofolate + NADP(+) = (6R)-5,10-methenyltetrahydrofolate + NADPH. The enzyme catalyses (6R)-5,10-methenyltetrahydrofolate + H2O = (6R)-10-formyltetrahydrofolate + H(+). The protein operates within one-carbon metabolism; tetrahydrofolate interconversion. Its function is as follows. Catalyzes the oxidation of 5,10-methylenetetrahydrofolate to 5,10-methenyltetrahydrofolate and then the hydrolysis of 5,10-methenyltetrahydrofolate to 10-formyltetrahydrofolate. The protein is Bifunctional protein FolD of Gloeothece citriformis (strain PCC 7424) (Cyanothece sp. (strain PCC 7424)).